Here is a 66-residue protein sequence, read N- to C-terminus: Photosystem II reaction center protein H (66 aa).

Residues 29 to 49 (PIMGLTMVLFLVFLLIILQIY) form a helical membrane-spanning segment.

Belongs to the PsbH family. In terms of assembly, PSII is composed of 1 copy each of membrane proteins PsbA, PsbB, PsbC, PsbD, PsbE, PsbF, PsbH, PsbI, PsbJ, PsbK, PsbL, PsbM, PsbT, PsbX, PsbY, PsbZ, Psb30/Ycf12, at least 3 peripheral proteins of the oxygen-evolving complex and a large number of cofactors. It forms dimeric complexes.

It is found in the plastid. It localises to the chloroplast thylakoid membrane. Functionally, one of the components of the core complex of photosystem II (PSII), required for its stability and/or assembly. PSII is a light-driven water:plastoquinone oxidoreductase that uses light energy to abstract electrons from H(2)O, generating O(2) and a proton gradient subsequently used for ATP formation. It consists of a core antenna complex that captures photons, and an electron transfer chain that converts photonic excitation into a charge separation. The protein is Photosystem II reaction center protein H of Thalassiosira pseudonana (Marine diatom).